The sequence spans 96 residues: Large ribosomal subunit protein eL30 (96 aa).

It belongs to the eukaryotic ribosomal protein eL30 family.

This Methanosphaerula palustris (strain ATCC BAA-1556 / DSM 19958 / E1-9c) protein is Large ribosomal subunit protein eL30.